The sequence spans 138 residues: Transcriptional regulator MraZ (138 aa).

SpoVT-AbrB domains are found at residues 3–45 (EFQH…PLAE) and 74–117 (ATEC…AAER).

Belongs to the MraZ family. As to quaternary structure, forms oligomers.

The protein resides in the cytoplasm. Its subcellular location is the nucleoid. The sequence is that of Transcriptional regulator MraZ from Symbiobacterium thermophilum (strain DSM 24528 / JCM 14929 / IAM 14863 / T).